Here is a 264-residue protein sequence, read N- to C-terminus: 5'-nucleotidase SurE (264 aa).

Residues Asp8, Asp9, Ser39, and Asn95 each coordinate a divalent metal cation.

Belongs to the SurE nucleotidase family. A divalent metal cation is required as a cofactor.

Its subcellular location is the cytoplasm. It carries out the reaction a ribonucleoside 5'-phosphate + H2O = a ribonucleoside + phosphate. Its function is as follows. Nucleotidase that shows phosphatase activity on nucleoside 5'-monophosphates. In Syntrophomonas wolfei subsp. wolfei (strain DSM 2245B / Goettingen), this protein is 5'-nucleotidase SurE.